We begin with the raw amino-acid sequence, 70 residues long: Cold shock-like protein CspG (70 aa).

The CSD domain occupies 7-67 (GLVKWFNEEK…GQKGLQAANV (61 aa)).

Its subcellular location is the cytoplasm. This Shewanella violacea (strain JCM 10179 / CIP 106290 / LMG 19151 / DSS12) protein is Cold shock-like protein CspG (cspG).